A 147-amino-acid polypeptide reads, in one-letter code: Diuretic hormone 45 (147 aa).

Positions 1 to 26 (MMWWAVWCAAMVAGSVFTAAAPPTDS) are cleaved as a signal peptide. The propeptide occupies 27–84 (IDLMQMDPSLADDESLGFAMQSLSGRYAAAPWLYLLADVSHDPQRMAEFSQSSGRARP). At Val-131 the chain carries Valine amide. The propeptide occupies 135–147 (GAWGEPASYLYNN).

Belongs to the sauvagine/corticotropin-releasing factor/urotensin I family.

The protein resides in the secreted. Functionally, regulation of fluid secretion. This is Diuretic hormone 45 (dh45) from Bombyx mori (Silk moth).